The primary structure comprises 380 residues: Cytochrome b (380 aa).

4 consecutive transmembrane segments (helical) span residues 33 to 53 (FGSLLGVCLMIQILTGLFLAM), 77 to 98 (WLIRYLHANGASMFFICLFIHV), 113 to 133 (WNIGIILLLTTMATAFVGYVL), and 178 to 198 (FFAFHFILPFIITALVLVHLL). Heme b is bound by residues His-83 and His-97. Residues His-182 and His-196 each contribute to the heme b site. An a ubiquinone-binding site is contributed by His-201. Transmembrane regions (helical) follow at residues 226–246 (IKDLLGVLLLLMVLMILVLFF), 288–308 (LGGVLALILSILILAAFPLLN), 320–340 (LTQFLYWVFIANLLVLTWIGG), and 347–367 (FTTIGQISSVLYFTIILVLMP).

Belongs to the cytochrome b family. The cytochrome bc1 complex contains 11 subunits: 3 respiratory subunits (MT-CYB, CYC1 and UQCRFS1), 2 core proteins (UQCRC1 and UQCRC2) and 6 low-molecular weight proteins (UQCRH/QCR6, UQCRB/QCR7, UQCRQ/QCR8, UQCR10/QCR9, UQCR11/QCR10 and a cleavage product of UQCRFS1). This cytochrome bc1 complex then forms a dimer. Heme b serves as cofactor.

The protein resides in the mitochondrion inner membrane. In terms of biological role, component of the ubiquinol-cytochrome c reductase complex (complex III or cytochrome b-c1 complex) that is part of the mitochondrial respiratory chain. The b-c1 complex mediates electron transfer from ubiquinol to cytochrome c. Contributes to the generation of a proton gradient across the mitochondrial membrane that is then used for ATP synthesis. The chain is Cytochrome b (MT-CYB) from Thomasomys notatus (Distinguished oldfield mouse).